The primary structure comprises 467 residues: Probable lipase C1672.09 (467 aa).

Residues 1-17 (MIQLPFIQRLKWEEYMA) are Cytoplasmic-facing. A helical; Signal-anchor for type II membrane protein membrane pass occupies residues 18–38 (LFLGFFFVIFEKLLSCLAFMI). The Lumenal segment spans residues 39–467 (HNTLGLFYRS…NHIAPRNKPI (429 aa)). Position 66 is a phosphoserine (Ser-66). An AB hydrolase-1 domain is found at 127–421 (PVVYCHHGLL…SYEHLDMIWA (295 aa)). Ser-222 (nucleophile) is an active-site residue. Residues Asn-311 and Asn-316 are each glycosylated (N-linked (GlcNAc...) asparagine). Catalysis depends on charge relay system residues Asp-389 and His-415. The span at 440-457 (HHPPEHEENDKENREIQK) shows a compositional bias: basic and acidic residues. The disordered stretch occupies residues 440 to 467 (HHPPEHEENDKENREIQKNHIAPRNKPI).

This sequence belongs to the AB hydrolase superfamily. Lipase family.

Its subcellular location is the cytoplasm. The protein resides in the membrane. Probable lipase. In Schizosaccharomyces pombe (strain 972 / ATCC 24843) (Fission yeast), this protein is Probable lipase C1672.09.